Consider the following 490-residue polypeptide: Tandem C2 domains nuclear protein (490 aa).

5 positions are modified to phosphoserine: serine 83, serine 156, serine 168, serine 174, and serine 211. Positions 189–215 (HDSLSSVPSSSSSRKNSQGSNRSLDTI) are disordered. The segment covering 192 to 211 (LSSVPSSSSSRKNSQGSNRS) has biased composition (low complexity). 2 positions are modified to phosphothreonine: threonine 214 and threonine 216. Serine 218 bears the Phosphoserine mark. C2 domains are found at residues 223–342 (DFGR…SLDI) and 344–471 (PPSK…NQWK). Residues 447–449 (RRK) carry the Nuclear localization signal motif.

Its subcellular location is the nucleus. This chain is Tandem C2 domains nuclear protein (TC2N), found in Homo sapiens (Human).